The sequence spans 1163 residues: Hamartin (1163 aa).

Lysine 30 participates in a covalent cross-link: Glycyl lysine isopeptide (Lys-Gly) (interchain with G-Cter in ubiquitin). Residues 295–316 are compositionally biased toward polar residues; sequence SSYVDTQNSYGGATSTPSSTSR. Disordered stretches follow at residues 295–337 and 353–594; these read SSYV…STRP and CGMT…QRGV. The segment covering 321–337 has biased composition (low complexity); the sequence is STPGQLPQSLSSLSTRP. Pro residues predominate over residues 393–402; that stretch reads TSPPPAPPCP. Residues 403-787 form a mediates interaction with WDR45B region; sequence QDDCAHGPAS…QIRQLQHDRE (385 aa). Residues 474–487 show a composition bias toward basic and acidic residues; it reads EKDKEEAAISKELS. 6 positions are modified to phosphoserine: serine 487, serine 505, serine 511, serine 521, serine 595, and serine 598. Positions 512-530 are enriched in polar residues; the sequence is LSGSQRKTHSAASGTQGFS. Coiled-coil stretches lie at residues 721–919 and 970–994; these read RKVI…LAKK and EKDG…ERLD. Positions 1008–1020 are enriched in basic and acidic residues; sequence NEEAAGHNGETRT. The interval 1008-1163 is disordered; it reads NEEAAGHNGE…DYNETHHEHS (156 aa). Residues 1029–1046 show a composition bias toward low complexity; sequence SCGGRVTGGSSSSSSELS. A compositionally biased stretch (polar residues) spans 1066-1083; that stretch reads EPSSSIPTTVGSLPSSKS. Residues 1088-1099 are compositionally biased toward basic and acidic residues; it reads KTRELFRNKSES. Position 1097 is a phosphoserine (serine 1097). A compositionally biased stretch (low complexity) spans 1131-1146; it reads PPSLDAPHPSSPSSDS. Residues 1154-1163 show a composition bias toward basic and acidic residues; sequence DYNETHHEHS.

Component of the TSC-TBC complex (also named Rhebulator complex), composed of 2 molecules of TSC1, 2 molecules of TSC2 and 1 molecule of TBC1D7. Probably forms a complex composed of chaperones HSP90 and HSP70, co-chaperones STIP1/HOP, CDC37, PPP5C, PTGES3/p23, TSC1 and client protein TSC2. Forms a complex composed of chaperones HSP90 and HSP70, co-chaperones CDC37, PPP5C, TSC1 and client protein TSC2, CDK4, AKT, RAF1 and NR3C1; this complex does not contain co-chaperones STIP1/HOP and PTGES3/p23. Forms a complex containing HSP90AA1, TSC1 and TSC2; TSC1 is required to recruit TCS2 to the complex. Interacts (via C-terminus) with the closed form of HSP90AA1 (via the middle domain and TPR repeat-binding motif). Interacts with DOCK7. Interacts with FBXW5. Interacts with WDR45B. Interacts with RPAP3 and URI1. Post-translationally, phosphorylation at Ser-505 does not affect interaction with TSC2. In terms of processing, 'Lys-63'-linked ubiquitinated at Lys-30 by PELI1; the ubiquitination promotes TSC1/TSC2 complex stability. Highly expressed in brain, spleen and kidney, followed by liver and heart.

The protein localises to the lysosome membrane. The protein resides in the cytoplasm. It localises to the cytosol. Functionally, non-catalytic component of the TSC-TBC complex, a multiprotein complex that acts as a negative regulator of the canonical mTORC1 complex, an evolutionarily conserved central nutrient sensor that stimulates anabolic reactions and macromolecule biosynthesis to promote cellular biomass generation and growth. The TSC-TBC complex acts as a GTPase-activating protein (GAP) for the small GTPase RHEB, a direct activator of the protein kinase activity of mTORC1. In absence of nutrients, the TSC-TBC complex inhibits mTORC1, thereby preventing phosphorylation of ribosomal protein S6 kinase (RPS6KB1 and RPS6KB2) and EIF4EBP1 (4E-BP1) by the mTORC1 signaling. The TSC-TBC complex is inactivated in response to nutrients, relieving inhibition of mTORC1. Within the TSC-TBC complex, TSC1 stabilizes TSC2 and prevents TSC2 self-aggregation. Involved in microtubule-mediated protein transport via its ability to regulate mTORC1 signaling. Also acts as a co-chaperone for HSP90AA1 facilitating HSP90AA1 chaperoning of protein clients such as kinases, TSC2 and glucocorticoid receptor NR3C1. Increases ATP binding to HSP90AA1 and inhibits HSP90AA1 ATPase activity. Competes with the activating co-chaperone AHSA1 for binding to HSP90AA1, thereby providing a reciprocal regulatory mechanism for chaperoning of client proteins. Recruits TSC2 to HSP90AA1 and stabilizes TSC2 by preventing the interaction between TSC2 and ubiquitin ligase HERC1. The polypeptide is Hamartin (Rattus norvegicus (Rat)).